A 241-amino-acid polypeptide reads, in one-letter code: MELKATPRKSQEKLAPGMIPAVAYNKEKNVTFAIERKAFDRAFRQQGTTGLFDIVIEGGETFPALVKAVQMDKRRREAIHADFYMVTYGEPVEVSVPVHTTGKSQGEIQGGLVDVVVHSLNVIAPGPRRIPQEITVDVTNLNIGDHVTAGQIKLPEGVKLAVEPDLVVLSVLPPRLSAEELEAQAQAAQVAGMVASGELSEAAAEAVLEGSASLDAVKAGEEGSRAQQETEEASERADQGQ.

The tract at residues 214-241 is disordered; it reads LDAVKAGEEGSRAQQETEEASERADQGQ.

It belongs to the bacterial ribosomal protein bL25 family. CTC subfamily. In terms of assembly, part of the 50S ribosomal subunit; part of the 5S rRNA/L5/L18/L25 subcomplex. Contacts the 5S rRNA. Binds to the 5S rRNA independently of L5 and L18.

This is one of the proteins that binds to the 5S RNA in the ribosome where it forms part of the central protuberance. This Deinococcus geothermalis (strain DSM 11300 / CIP 105573 / AG-3a) protein is Large ribosomal subunit protein bL25.